The following is an 83-amino-acid chain: Mitochondrial import inner membrane translocase subunit Tim8 (83 aa).

The Twin CX3C motif motif lies at 35–60 (CWDVCFSDYRPPSKMDGKTQTCIQNC). Intrachain disulfides connect C35–C60 and C39–C56.

This sequence belongs to the small Tim family. In terms of assembly, heterohexamer; composed of 3 copies of ddp-1/tim-8 and 3 copies of tin-13/tim-13, named soluble 70 kDa complex. Associates with the TIM22 complex, whose core is composed of tim-22.

It localises to the mitochondrion inner membrane. In terms of biological role, mitochondrial intermembrane chaperone that participates in the import and insertion of some multi-pass transmembrane proteins into the mitochondrial inner membrane. Also required for the transfer of beta-barrel precursors from the TOM complex to the sorting and assembly machinery (SAM complex) of the outer membrane. Acts as a chaperone-like protein that protects the hydrophobic precursors from aggregation and guide them through the mitochondrial intermembrane space. The ddp-1/tim-8-tim-13 complex mediates the import of some proteins while the predominant tim-9/tin-9.1-tim-10/tin-10 70 kDa complex mediates the import of much more proteins. The chain is Mitochondrial import inner membrane translocase subunit Tim8 from Caenorhabditis briggsae.